The primary structure comprises 87 residues: Small ribosomal subunit protein eS21B (87 aa).

Met1 is subject to N-acetylmethionine.

It belongs to the eukaryotic ribosomal protein eS21 family. Component of the small ribosomal subunit (SSU). Mature yeast ribosomes consist of a small (40S) and a large (60S) subunit. The 40S small subunit contains 1 molecule of ribosomal RNA (18S rRNA) and 33 different proteins (encoded by 57 genes). The large 60S subunit contains 3 rRNA molecules (25S, 5.8S and 5S rRNA) and 46 different proteins (encoded by 81 genes). Post-translationally, N-terminally acetylated by acetyltransferase NatB.

It is found in the cytoplasm. Component of the ribosome, a large ribonucleoprotein complex responsible for the synthesis of proteins in the cell. The small ribosomal subunit (SSU) binds messenger RNAs (mRNAs) and translates the encoded message by selecting cognate aminoacyl-transfer RNA (tRNA) molecules. The large subunit (LSU) contains the ribosomal catalytic site termed the peptidyl transferase center (PTC), which catalyzes the formation of peptide bonds, thereby polymerizing the amino acids delivered by tRNAs into a polypeptide chain. The nascent polypeptides leave the ribosome through a tunnel in the LSU and interact with protein factors that function in enzymatic processing, targeting, and the membrane insertion of nascent chains at the exit of the ribosomal tunnel. eS21 is required for the processing of the 20S rRNA-precursor to mature 18S rRNA in a late step of the maturation of 40S ribosomal subunits. Has a physiological role leading to 18S rRNA stability. This chain is Small ribosomal subunit protein eS21B, found in Saccharomyces cerevisiae (strain ATCC 204508 / S288c) (Baker's yeast).